A 519-amino-acid chain; its full sequence is Exodeoxyribonuclease 7 large subunit (519 aa).

Residues 500–519 (VGRGKTRKPKEEPPAQGSLL) are disordered.

It belongs to the XseA family. As to quaternary structure, heterooligomer composed of large and small subunits.

Its subcellular location is the cytoplasm. The enzyme catalyses Exonucleolytic cleavage in either 5'- to 3'- or 3'- to 5'-direction to yield nucleoside 5'-phosphates.. Bidirectionally degrades single-stranded DNA into large acid-insoluble oligonucleotides, which are then degraded further into small acid-soluble oligonucleotides. The sequence is that of Exodeoxyribonuclease 7 large subunit from Cereibacter sphaeroides (strain KD131 / KCTC 12085) (Rhodobacter sphaeroides).